A 609-amino-acid polypeptide reads, in one-letter code: UvrABC system protein C (609 aa).

Positions 16–94 (SSPGVYRMYD…IKQYMPKYNV (79 aa)) constitute a GIY-YIG domain. The UVR domain occupies 203–238 (QQVMSVLVQKMEQASSDMRYEQAALYRDQITALRRV).

The protein belongs to the UvrC family. In terms of assembly, interacts with UvrB in an incision complex.

It is found in the cytoplasm. The UvrABC repair system catalyzes the recognition and processing of DNA lesions. UvrC both incises the 5' and 3' sides of the lesion. The N-terminal half is responsible for the 3' incision and the C-terminal half is responsible for the 5' incision. The protein is UvrABC system protein C of Shewanella pealeana (strain ATCC 700345 / ANG-SQ1).